The sequence spans 2748 residues: Chalcone synthase cfoA (2748 aa).

Residues 13-511 (RHAGESCEKV…DTVPRTVIGK (499 aa)) are adenylation (A) domain. Residues 535–620 (DLIEALVMAE…AVSTYLHGRL (86 aa)) enclose the Carrier 1 domain. O-(pantetheine 4'-phosphoryl)serine is present on S579. A Ketosynthase family 3 (KS3) domain is found at 641 to 1073 (VEPIAIVSMA…GTNSHIILEQ (433 aa)). Residues C813, H948, and H995 each act as for beta-ketoacyl synthase activity in the active site. Residues 1196–1489 (FSGQGSWMPT…ATHGTVDKLL (294 aa)) form the Malonyl-CoA:ACP transacylase (MAT) domain. The tract at residues 1561-1842 (LGHEMIFNAT…ENSFSMTMTD (282 aa)) is dehydratase (DH) domain. Residues 1563-1707 (HEMIFNATSI…GTFQLISQPN (145 aa)) are N-terminal hotdog fold. Positions 1563-1866 (HEMIFNATSI…LRTWQPTVAG (304 aa)) constitute a PKS/mFAS DH domain. H1595 acts as the Proton acceptor; for dehydratase activity in catalysis. A C-terminal hotdog fold region spans residues 1722–1866 (AESDVNISEA…LRTWQPTVAG (145 aa)). Residue D1784 is the Proton donor; for dehydratase activity of the active site. The Ketoreductase (KR) domain occupies 2031–2210 (GTVLITGGTG…ALSLAWGPWA (180 aa)). The Carrier 2 domain occupies 2305 to 2383 (NRHDTLLGLV…ALVEYLLPRI (79 aa)). At S2342 the chain carries O-(pantetheine 4'-phosphoryl)serine. The interval 2386–2426 (EPQPEVDTDSDASTTAGDTSVSRDSGKEDELSPSSSVTTLA) is disordered. Over residues 2396-2407 (DASTTAGDTSVS) the composition is skewed to low complexity. Positions 2519–2742 (VGLSVYSNLA…GAAGEIERWA (224 aa)) are thioester reductase (TE) domain.

It in the N-terminal section; belongs to the NRP synthetase family. Pantetheine 4'-phosphate serves as cofactor.

It functions in the pathway secondary metabolite biosynthesis; flavonoid biosynthesis. Its function is as follows. Hybrid PKS-NRPS synthetase; part of the gene cluster that mediates the biosynthesis of chlorflavonin, a fungal flavonoid with acetolactate synthase inhibitory activity. Within the pathway, the PKS-NRPS cfoA, is responsible for the generation of the key precursor chalcone. The adenylation (A) domain activates benzoic acid or p-hydroxybenzoic acid which are transferred to the thiol group of the pantetheinyl residue of the T domain, and further transferred to the adjacent PKS portion of cfoA. Within the PKS portion of cfoA, benzoic acid or p-hydroxybenzoic acid act as starter units for respectively four malonyl-CoA molecules for elongation by the AT and KS domains. Afterwards, chalcone is cyclized through Claisen condensation and thereby released either spontaneously or catalyzed by the TE domain. Then, a new type of chalcone isomerase, cfoK, catalyzes the conversion of the chalcone into a flavanone by a histidine-mediated oxa-Michael addition mechanism. The desaturation of flavanone to flavone is catalyzed by a new type of flavone synthase, the flavin mononucleotide (FMN)-dependent oxidoreductase cfoJ. Monooxygenases cfoF, cfoG, and P450 cfoH are responsible for the hydroxylation of the flavonoid skeleton at sites C3, C8, and C2', respectively. Like cfoF, the dehydratase cfoI plays also a role in the hydroxylation of position C3. Methyltransferases cfoB, cfoC, and cfoD then catalyze the methylation of C7-OH, C8-OH, and C3-OH, respectively. Finally, the monooxygenase cfoE is responsible for the chlorination of flavonoid at position C3'. The protein is Chalcone synthase cfoA of Aspergillus candidus.